Here is a 355-residue protein sequence, read N- to C-terminus: Chemerin-like receptor 2 (355 aa).

Topologically, residues 1–41 are extracellular; it reads MEDLEETLFEEFENYSYDLDYYSLESDLEEKVQLGVVHWVS. The N-linked (GlcNAc...) asparagine glycan is linked to Asn14. Residues 42-62 form a helical membrane-spanning segment; the sequence is LVLYCLAFVLGIPGNAIVIWF. The Cytoplasmic portion of the chain corresponds to 63 to 73; sequence TGFKWKKTVTT. Residues 74–94 form a helical membrane-spanning segment; that stretch reads LWFLNLAIADFIFLLFLPLYI. Over 95 to 112 the chain is Extracellular; the sequence is SYVAMNFHWPFGIWLCKA. A disulfide bridge connects residues Cys110 and Cys187. A helical membrane pass occupies residues 113–133; it reads NSFTAQLNMFASVFFLTVISL. Residues 134 to 154 lie on the Cytoplasmic side of the membrane; it reads DHYIHLIHPVLSHRHRTLKNS. A helical membrane pass occupies residues 155–175; the sequence is LIVIIFIWLLASLIGGPALYF. The Extracellular segment spans residues 176 to 210; sequence RDTVEFNNHTLCYNNFQKHDPDLTLIRHHVLTWVK. The helical transmembrane segment at 211–231 threads the bilayer; the sequence is FIIGYLFPLLTMSICYLCLIF. Topologically, residues 232 to 247 are cytoplasmic; that stretch reads KVKKRSILISSRHFWT. The chain crosses the membrane as a helical span at residues 248-268; that stretch reads ILVVVVAFVVCWTPYHLFSIW. At 269–286 the chain is on the extracellular side; it reads ELTIHHNSYSHHVMQAGI. The chain crosses the membrane as a helical span at residues 287-307; the sequence is PLSTGLAFLNSCLNPILYVLI. The Cytoplasmic portion of the chain corresponds to 308–355; that stretch reads SKKFQARFRSSVAEILKYTLWEVSCSGTVSEQLRNSETKNLCLLETAQ.

The protein belongs to the chemokine-like receptor (CMKLR) family. As to expression, expressed in hippocampus.

It is found in the cell membrane. Functionally, receptor for chemoattractant adipokine chemerin/RARRES2 suggesting a role for this receptor in the regulation of inflammation and energy homesotasis. Signals mainly via beta-arrestin pathway. Binding of RARRES2 activates weakly G proteins, calcium mobilization and MAPK1/MAPK3 (ERK1/2) phosphorylation too. Also acts as a receptor for TAFA1, mediates its effects on neuronal stem-cell proliferation and differentiation via the activation of ROCK/ERK and ROCK/STAT3 signaling pathway. (Microbial infection) Coreceptor for HIV-1. The chain is Chemerin-like receptor 2 from Homo sapiens (Human).